The sequence spans 149 residues: Transcriptional repressor NrdR (149 aa).

The segment at 3 to 34 (CPFCSATDTKVIDSRLVAEGHQVRRRRECTEC) is a zinc-finger region. One can recognise an ATP-cone domain in the interval 49–139 (PRVIKRDGSR…VYRAFEDVSE (91 aa)).

It belongs to the NrdR family. Zn(2+) is required as a cofactor.

Functionally, negatively regulates transcription of bacterial ribonucleotide reductase nrd genes and operons by binding to NrdR-boxes. The polypeptide is Transcriptional repressor NrdR (Shewanella baltica (strain OS223)).